A 136-amino-acid polypeptide reads, in one-letter code: MFQSLIAIDYGKARIGIASGQMITKTATPIGTVEAYDGVPNWIELDKIIKRWNPSDIIIGLPLDTQNFETDITKAAKDFAKEVQQRYQRKVHLINEAYSTREARWRLEEVKSKKVSHIKVDALAACVILETWMSEN.

The protein belongs to the YqgF nuclease family.

Its subcellular location is the cytoplasm. Its function is as follows. Could be a nuclease involved in processing of the 5'-end of pre-16S rRNA. This is Putative pre-16S rRNA nuclease from Francisella tularensis subsp. novicida (strain U112).